The primary structure comprises 514 residues: MSLTEEIKKRRTFAIISHPDAGKTTITEQLLYFGGEIREAGTVKGKKSGTFAKSDWMDIEKQRGISVTSSVMQFDYAGKRVNILDTPGHEDFSEDTYRTLMAVDAAVMVVDSAKGIEAQTKKLFEVVKHRNIPVFTFINKLDRDGREPLELLEELEEVLGIASYPMNWPIGMGRAFEGLYDLHNKRLELYKGDERFASIEDGDQLFANNPFYEQVKEDIELLQEAGNDFSEQAILDGDLTPVFFGSALTNFGVQTFLDTFLEFAPEPHGHKTTEGNVIDPLAKDFSGFVFKIQANMDPKHRDRIAFVRIVSGEFERGMGVNLTRTGKGAKLSNVTQFMAESRENVTNAVAGDIIGVYDTGTYQVGDTLTVGKNKFEFEPLPTFTPEIFMKVSPKNVMKQKSFHKGIEQLVQEGAIQLYKNYQTGEYMLGAVGQLQFEVFKHRMEGEYNAEVVMTPMGKKTVRWISEDDLDQRMSSSRNILAKDRFDQPVFLFENDFALRWFADKYPDVTLEEKM.

One can recognise a tr-type G domain in the interval 8-268; it reads KKRRTFAIIS…TFLEFAPEPH (261 aa). GTP contacts are provided by residues 17-24, 85-89, and 139-142; these read SHPDAGKT, DTPGH, and NKLD.

Belongs to the TRAFAC class translation factor GTPase superfamily. Classic translation factor GTPase family. PrfC subfamily.

The protein localises to the cytoplasm. Functionally, increases the formation of ribosomal termination complexes and stimulates activities of RF-1 and RF-2. It binds guanine nucleotides and has strong preference for UGA stop codons. It may interact directly with the ribosome. The stimulation of RF-1 and RF-2 is significantly reduced by GTP and GDP, but not by GMP. The protein is Peptide chain release factor 3 of Streptococcus pyogenes serotype M18 (strain MGAS8232).